Reading from the N-terminus, the 646-residue chain is Anoctamin-10 (646 aa).

8 consecutive transmembrane segments (helical) span residues 210-230, 241-261, 314-334, 357-377, 404-424, 502-522, 557-577, and 592-612; these read LYFG…LIGI, DKYV…LEVW, IYLV…YVMM, VLLF…NLLY, VLVF…FVMQ, FLLF…AVLV, LAFE…IALS, and ILTV…LAFV.

Belongs to the anoctamin family.

The protein resides in the membrane. Does not exhibit calcium-activated chloride channel (CaCC) activity. Can inhibit the activity of ANO1. In Danio rerio (Zebrafish), this protein is Anoctamin-10 (ano10).